The following is a 328-amino-acid chain: uncharacterized protein (328 aa).

Coiled coils occupy residues 67-190 (FKEQ…VLEE) and 223-251 (MAQRQKQEEVQEVLQEAEKTHQATLDNMM).

This is an uncharacterized protein from Mus musculus (Mouse).